Consider the following 445-residue polypeptide: tRNA(Ile2) 2-agmatinylcytidine synthetase TiaS (445 aa).

Residues 278–349 constitute a DNA-binding region (OB); that stretch reads VVVRGSVAEK…KDGLVLNAEY (72 aa).

It belongs to the TiaS family.

The protein localises to the cytoplasm. The catalysed reaction is cytidine(34) in tRNA(Ile2) + agmatine + ATP + H2O = 2-agmatinylcytidine(34) in tRNA(Ile2) + AMP + 2 phosphate + 2 H(+). ATP-dependent agmatine transferase that catalyzes the formation of 2-agmatinylcytidine (agm2C) at the wobble position (C34) of tRNA(Ile2), converting the codon specificity from AUG to AUA. The protein is tRNA(Ile2) 2-agmatinylcytidine synthetase TiaS of Thermofilum pendens (strain DSM 2475 / Hrk 5).